Here is a 133-residue protein sequence, read N- to C-terminus: Fatty acid-binding protein, heart (133 aa).

Residue A2 is modified to N-acetylalanine. At T8 the chain carries Phosphothreonine. At Y20 the chain carries Phosphotyrosine; by Tyr-kinases. S23 is modified (phosphoserine). Residue T30 is modified to Phosphothreonine. S83 is subject to Phosphoserine. (9Z)-octadecenoate is bound at residue 127–129; sequence RTY. Position 127 to 129 (127 to 129) interacts with hexadecanoate; it reads RTY. 127–129 serves as a coordination point for octadecanoate; the sequence is RTY.

In terms of tissue distribution, heart, but also skeletal muscle, kidney, brain and mammary gland.

The protein resides in the cytoplasm. Its function is as follows. FABPs are thought to play a role in the intracellular transport of long-chain fatty acids and their acyl-CoA esters. The polypeptide is Fatty acid-binding protein, heart (Fabp3) (Rattus norvegicus (Rat)).